The following is a 305-amino-acid chain: Tetraspanin-12 (305 aa).

The Cytoplasmic segment spans residues M1–C12. S-palmitoyl cysteine attachment occurs at residues C9 and C12. A helical transmembrane segment spans residues L13–A33. The Extracellular portion of the chain corresponds to W34–Y59. A helical membrane pass occupies residues F60–L80. Topologically, residues G81–N89 are cytoplasmic. A lipid anchor (S-palmitoyl cysteine) is attached at C83. The helical transmembrane segment at L90–C110 threads the bilayer. Over G111–R224 the chain is Extracellular. A helical membrane pass occupies residues F225–L245. Residues W246–L305 are Cytoplasmic-facing.

This sequence belongs to the tetraspanin (TM4SF) family. As to quaternary structure, interacts (when palmitoylated) with ADAM10. Interacts with MMP14/MT1-MMP. Component of a complex, at least composed of TSPAN12, FZD4 and norrin (NDP). In terms of processing, palmitoylated; required for interaction with ADAM10. Expressed in the neonatal retinal vasculature but not other retinal tissues. Also detected in the neonatal meningeal vasculature and in nonvascular cell types, such as the smooth muscle cells in the neonatal intestine.

It localises to the cell membrane. Its function is as follows. Regulator of cell surface receptor signal transduction. Acts as a regulator of membrane proteinases such as ADAM10 and MMP14/MT1-MMP. Activates ADAM10-dependent cleavage activity of amyloid precursor protein (APP). Activates MMP14/MT1-MMP-dependent cleavage activity. Plays a central role in retinal vascularization by regulating norrin (NDP) signal transduction. Acts in concert with norrin (NDP) to promote FZD4 multimerization and subsequent activation of FZD4, leading to promote accumulation of beta-catenin (CTNNB1) and stimulate LEF/TCF-mediated transcriptional programs. Suprisingly, it only activate the norrin (NDP)-dependent activation of FZD4, while it does not activate the Wnt-dependent activation of FZD4, suggesting the existence of a Wnt-independent signaling that also promote accumulation the beta-catenin (CTNNB1). The protein is Tetraspanin-12 (Tspan12) of Mus musculus (Mouse).